Consider the following 527-residue polypeptide: Peptide chain release factor 3 (527 aa).

The tr-type G domain maps to 9 to 277; sequence AKRRTFAIIS…AVVNWAPMPL (269 aa). Residues 18–25, 86–90, and 140–143 each bind GTP; these read SHPDAGKT, DTPGH, and NKLD.

This sequence belongs to the TRAFAC class translation factor GTPase superfamily. Classic translation factor GTPase family. PrfC subfamily.

It localises to the cytoplasm. Functionally, increases the formation of ribosomal termination complexes and stimulates activities of RF-1 and RF-2. It binds guanine nucleotides and has strong preference for UGA stop codons. It may interact directly with the ribosome. The stimulation of RF-1 and RF-2 is significantly reduced by GTP and GDP, but not by GMP. The chain is Peptide chain release factor 3 from Pseudomonas syringae pv. tomato (strain ATCC BAA-871 / DC3000).